A 142-amino-acid polypeptide reads, in one-letter code: Galactose-binding lectin l-1 (142 aa).

The 132-residue stretch at 3–134 (FVEVKNLIMK…DATVKNISVN (132 aa)) folds into the Galectin domain. Residue 68-74 (WQEEQRD) participates in a beta-D-galactoside binding. Residue asparagine 130 is glycosylated (N-linked (GlcNAc...) asparagine).

As to quaternary structure, homodimer. In terms of processing, the N-terminus is blocked. Skin; highest expression in that of individuals showing resistance to infectious disease.

It localises to the secreted. In terms of biological role, involved in host defense at the body surface. Causes agglutination of the Gram-positive bacterium S.difficile. Possesses calcium-independent hemagglutinating activity. In Anguilla japonica (Japanese eel), this protein is Galactose-binding lectin l-1.